Here is a 946-residue protein sequence, read N- to C-terminus: Bifunctional glutamine synthetase adenylyltransferase/adenylyl-removing enzyme (946 aa).

Residues 1-440 form an adenylyl removase region; the sequence is MKPLSSPLQQ…VFNELIGDDE (440 aa). The adenylyl transferase stretch occupies residues 449–946; sequence SEHWRELWQD…ASWQKWLVAG (498 aa).

Belongs to the GlnE family. The cofactor is Mg(2+).

It catalyses the reaction [glutamine synthetase]-O(4)-(5'-adenylyl)-L-tyrosine + phosphate = [glutamine synthetase]-L-tyrosine + ADP. The enzyme catalyses [glutamine synthetase]-L-tyrosine + ATP = [glutamine synthetase]-O(4)-(5'-adenylyl)-L-tyrosine + diphosphate. Its function is as follows. Involved in the regulation of glutamine synthetase GlnA, a key enzyme in the process to assimilate ammonia. When cellular nitrogen levels are high, the C-terminal adenylyl transferase (AT) inactivates GlnA by covalent transfer of an adenylyl group from ATP to specific tyrosine residue of GlnA, thus reducing its activity. Conversely, when nitrogen levels are low, the N-terminal adenylyl removase (AR) activates GlnA by removing the adenylyl group by phosphorolysis, increasing its activity. The regulatory region of GlnE binds the signal transduction protein PII (GlnB) which indicates the nitrogen status of the cell. This is Bifunctional glutamine synthetase adenylyltransferase/adenylyl-removing enzyme from Citrobacter koseri (strain ATCC BAA-895 / CDC 4225-83 / SGSC4696).